The sequence spans 55 residues: uncharacterized protein (55 aa).

This is an uncharacterized protein from Homo sapiens (Human).